Consider the following 123-residue polypeptide: Small ribosomal subunit protein uS12 (123 aa).

Positions Met-1 to Thr-21 are disordered. The span at Arg-9–Lys-20 shows a compositional bias: basic residues. At Asp-89 the chain carries 3-methylthioaspartic acid.

This sequence belongs to the universal ribosomal protein uS12 family. In terms of assembly, part of the 30S ribosomal subunit. Contacts proteins S8 and S17. May interact with IF1 in the 30S initiation complex.

Its function is as follows. With S4 and S5 plays an important role in translational accuracy. In terms of biological role, interacts with and stabilizes bases of the 16S rRNA that are involved in tRNA selection in the A site and with the mRNA backbone. Located at the interface of the 30S and 50S subunits, it traverses the body of the 30S subunit contacting proteins on the other side and probably holding the rRNA structure together. The combined cluster of proteins S8, S12 and S17 appears to hold together the shoulder and platform of the 30S subunit. This is Small ribosomal subunit protein uS12 from Bifidobacterium longum subsp. infantis (strain ATCC 15697 / DSM 20088 / JCM 1222 / NCTC 11817 / S12).